Reading from the N-terminus, the 57-residue chain is Large ribosomal subunit protein eL20 (57 aa).

The protein belongs to the eukaryotic ribosomal protein eL20 family. As to quaternary structure, part of the 50S ribosomal subunit. Binds 23S rRNA.

The chain is Large ribosomal subunit protein eL20 from Natronomonas pharaonis (strain ATCC 35678 / DSM 2160 / CIP 103997 / JCM 8858 / NBRC 14720 / NCIMB 2260 / Gabara) (Halobacterium pharaonis).